Consider the following 87-residue polypeptide: Large ribosomal subunit protein bL27 (87 aa).

The interval 1–25 is disordered; the sequence is MAHKKGASSSRNGRDSNAQRLGVKR. The segment covering 7 to 19 has biased composition (polar residues); the sequence is ASSSRNGRDSNAQ.

It belongs to the bacterial ribosomal protein bL27 family.

The chain is Large ribosomal subunit protein bL27 from Rhodococcus opacus (strain B4).